We begin with the raw amino-acid sequence, 202 residues long: Ribosome maturation factor RimM (202 aa).

Residues 121–202 form the PRC barrel domain; sequence ADEYYWVDLI…CITVDWQPDY (82 aa).

It belongs to the RimM family. Binds ribosomal protein uS19.

It is found in the cytoplasm. In terms of biological role, an accessory protein needed during the final step in the assembly of 30S ribosomal subunit, possibly for assembly of the head region. Essential for efficient processing of 16S rRNA. May be needed both before and after RbfA during the maturation of 16S rRNA. It has affinity for free ribosomal 30S subunits but not for 70S ribosomes. This chain is Ribosome maturation factor RimM, found in Polaromonas naphthalenivorans (strain CJ2).